A 189-amino-acid chain; its full sequence is Putative manganese efflux pump MntP (189 aa).

The next 6 membrane-spanning stretches (helical) occupy residues 3-23, 41-61, 69-89, 105-125, 133-153, and 168-188; these read PISLLFLALAMSTDAFAAALG, LIFGAIETITPVIGWGIGQVA, DHWIAFTLLLVLGLHMIYNGI, FWILAVTAFATSIDALAVGVG, IVIAALAIGLATTVMVTIGVM, and IVGGIVLIIVGATILYEHLSA.

Belongs to the MntP (TC 9.B.29) family.

It is found in the cell inner membrane. Functionally, probably functions as a manganese efflux pump. This Pseudomonas savastanoi pv. phaseolicola (strain 1448A / Race 6) (Pseudomonas syringae pv. phaseolicola (strain 1448A / Race 6)) protein is Putative manganese efflux pump MntP.